A 230-amino-acid polypeptide reads, in one-letter code: Large ribosomal subunit protein uL1 (230 aa).

Belongs to the universal ribosomal protein uL1 family. In terms of assembly, part of the 50S ribosomal subunit.

Functionally, binds directly to 23S rRNA. The L1 stalk is quite mobile in the ribosome, and is involved in E site tRNA release. Its function is as follows. Protein L1 is also a translational repressor protein, it controls the translation of the L11 operon by binding to its mRNA. This chain is Large ribosomal subunit protein uL1, found in Thermoanaerobacter sp. (strain X514).